Here is a 503-residue protein sequence, read N- to C-terminus: Alpha-1-syntrophin (503 aa).

2 consecutive PH domains span residues 6–263 (RAPR…AQIG) and 287–399 (DIKQ…DGCH). Residues 40–68 (LTVSPADGEPGPEPEPAQLNGAAEPGAAP) form a disordered region. Residues 81–164 (RVTVRKADAG…EVVLEVKYMK (84 aa)) enclose the PDZ domain. 5 positions are modified to phosphoserine: Ser-95, Ser-178, Ser-183, Ser-187, and Ser-194. The interval 177 to 203 (TSVGWDSPPASPLQRQPSSPGPQPRNL) is disordered. The 57-residue stretch at 447–503 (PFEKLQMSSDDGTSLLFLDFGGAEGEIQLDLHSCPKTMVFIIHSFLSAKVTRLGLLA) folds into the SU domain. Residues 481–503 (PKTMVFIIHSFLSAKVTRLGLLA) form a calmodulin-binding region.

Belongs to the syntrophin family. As to quaternary structure, monomer and homodimer. Interacts with MAPK12, TGFA, GA and F-actin. Interacts with the other members of the syntrophin family: SNTB1 and SNTB2; with dystrophin protein DMD and related proteins DTNA and UTRN; SGCG and SGCA of the dystrophin glycoprotein complex; NOS1; GRB2; calmodulin and the sodium channel proteins SCN4A and SCN5A. Interacts with MYOC; regulates muscle hypertrophy. Interacts with DTNB. In terms of processing, phosphorylated by CaM-kinase II. Phosphorylation may inhibit the interaction with DMD. High expression in skeletal muscle. Expressed at intermediate level in heart, kidney and brain, and at low level in intestine, liver, lung and testis.

Its subcellular location is the cell membrane. It localises to the sarcolemma. It is found in the cell junction. The protein localises to the cytoplasm. The protein resides in the cytoskeleton. Functionally, adapter protein that binds to and probably organizes the subcellular localization of a variety of membrane proteins. May link various receptors to the actin cytoskeleton and the extracellular matrix via the dystrophin glycoprotein complex. Plays an important role in synapse formation and in the organization of UTRN and acetylcholine receptors at the neuromuscular synapse. Binds to phosphatidylinositol 4,5-bisphosphate. This is Alpha-1-syntrophin (Snta1) from Mus musculus (Mouse).